A 187-amino-acid polypeptide reads, in one-letter code: Large ribosomal subunit protein uL5 (187 aa).

The protein belongs to the universal ribosomal protein uL5 family. In terms of assembly, part of the 50S ribosomal subunit; part of the 5S rRNA/L5/L18/L25 subcomplex. Contacts the 5S rRNA and the P site tRNA. Forms a bridge to the 30S subunit in the 70S ribosome.

This is one of the proteins that bind and probably mediate the attachment of the 5S RNA into the large ribosomal subunit, where it forms part of the central protuberance. In the 70S ribosome it contacts protein S13 of the 30S subunit (bridge B1b), connecting the 2 subunits; this bridge is implicated in subunit movement. Contacts the P site tRNA; the 5S rRNA and some of its associated proteins might help stabilize positioning of ribosome-bound tRNAs. The polypeptide is Large ribosomal subunit protein uL5 (Mycolicibacterium smegmatis (strain ATCC 700084 / mc(2)155) (Mycobacterium smegmatis)).